Here is a 192-residue protein sequence, read N- to C-terminus: Imidazoleglycerol-phosphate dehydratase (192 aa).

It belongs to the imidazoleglycerol-phosphate dehydratase family.

It localises to the cytoplasm. The catalysed reaction is D-erythro-1-(imidazol-4-yl)glycerol 3-phosphate = 3-(imidazol-4-yl)-2-oxopropyl phosphate + H2O. It participates in amino-acid biosynthesis; L-histidine biosynthesis; L-histidine from 5-phospho-alpha-D-ribose 1-diphosphate: step 6/9. This Methanocella arvoryzae (strain DSM 22066 / NBRC 105507 / MRE50) protein is Imidazoleglycerol-phosphate dehydratase.